An 84-amino-acid chain; its full sequence is Large ribosomal subunit protein bL31 (84 aa).

Zn(2+)-binding residues include C16, C18, C38, and C41.

This sequence belongs to the bacterial ribosomal protein bL31 family. Type A subfamily. As to quaternary structure, part of the 50S ribosomal subunit. Requires Zn(2+) as cofactor.

Its function is as follows. Binds the 23S rRNA. In Mycobacterium leprae (strain Br4923), this protein is Large ribosomal subunit protein bL31.